We begin with the raw amino-acid sequence, 86 residues long: Acyl-CoA-binding protein homolog (86 aa).

The ACB domain maps to 2–86; that stretch reads VSEQFNAAAE…FVEGLVAKYA (85 aa). An acyl-CoA-binding positions include Lys-14, 29-33, Lys-51, Lys-55, and Tyr-74; that span reads YALFK.

This sequence belongs to the ACBP family. In terms of tissue distribution, expressed in larval and pupal brains. In adults, expressed in cardia, part of the Malpighian tubules, fat body, and gametes of both sexes.

Its function is as follows. Binds medium- and long-chain acyl-CoA esters with very high affinity and may function as an intracellular carrier of acyl-CoA esters. May be involved in energy metabolism in a manner that depends on the substrate used for energy production. Dbi and its metabolites are involved in the regulation of multiple biological processes. This chain is Acyl-CoA-binding protein homolog, found in Drosophila melanogaster (Fruit fly).